The primary structure comprises 610 residues: Sulfite reductase [NADPH] flavoprotein alpha-component (610 aa).

The Flavodoxin-like domain occupies 68–206 (IIVISASQTG…EVDKWKEKVV (139 aa)). Residues 74 to 79 (SQTGNA), 121 to 124 (STHG), and 157 to 166 (LGDRSYEYFA) contribute to the FMN site. The 217-residue stretch at 243–459 (EFPLIAYLLN…VESNDNFRLP (217 aa)) folds into the FAD-binding FR-type domain. FAD is bound by residues Thr331, Ser365, 397–400 (RFYS), 415–417 (TVS), Tyr421, and 430–433 (GGAS). NADP(+)-binding positions include 530 to 531 (SR), 536 to 540 (KVYVQ), and Asp572. Tyr610 is an FAD binding site.

This sequence belongs to the NADPH-dependent sulphite reductase flavoprotein subunit CysJ family. It in the N-terminal section; belongs to the flavodoxin family. The protein in the C-terminal section; belongs to the flavoprotein pyridine nucleotide cytochrome reductase family. As to quaternary structure, alpha(8)-beta(8). The alpha component is a flavoprotein, the beta component is a hemoprotein. Requires FAD as cofactor. FMN serves as cofactor.

The enzyme catalyses hydrogen sulfide + 3 NADP(+) + 3 H2O = sulfite + 3 NADPH + 4 H(+). Its pathway is sulfur metabolism; hydrogen sulfide biosynthesis; hydrogen sulfide from sulfite (NADPH route): step 1/1. In terms of biological role, component of the sulfite reductase complex that catalyzes the 6-electron reduction of sulfite to sulfide. This is one of several activities required for the biosynthesis of L-cysteine from sulfate. The flavoprotein component catalyzes the electron flow from NADPH -&gt; FAD -&gt; FMN to the hemoprotein component. This is Sulfite reductase [NADPH] flavoprotein alpha-component from Blochmanniella floridana.